The sequence spans 240 residues: Methylthioribulose-1-phosphate dehydratase (240 aa).

Position 103 (cysteine 103) interacts with substrate. Positions 121 and 123 each coordinate Zn(2+). Glutamate 144 acts as the Proton donor/acceptor in catalysis. Histidine 200 contacts Zn(2+).

The protein belongs to the aldolase class II family. MtnB subfamily. Zn(2+) serves as cofactor.

Its subcellular location is the cytoplasm. The catalysed reaction is 5-(methylsulfanyl)-D-ribulose 1-phosphate = 5-methylsulfanyl-2,3-dioxopentyl phosphate + H2O. It functions in the pathway amino-acid biosynthesis; L-methionine biosynthesis via salvage pathway; L-methionine from S-methyl-5-thio-alpha-D-ribose 1-phosphate: step 2/6. In terms of biological role, catalyzes the dehydration of methylthioribulose-1-phosphate (MTRu-1-P) into 2,3-diketo-5-methylthiopentyl-1-phosphate (DK-MTP-1-P). The sequence is that of Methylthioribulose-1-phosphate dehydratase from Komagataella phaffii (strain GS115 / ATCC 20864) (Yeast).